The primary structure comprises 323 residues: o-succinylbenzoate synthase (323 aa).

K134 functions as the Proton donor in the catalytic mechanism. Mg(2+) is bound by residues D162, E191, and D214. K236 acts as the Proton acceptor in catalysis.

Belongs to the mandelate racemase/muconate lactonizing enzyme family. MenC type 1 subfamily. A divalent metal cation is required as a cofactor.

The enzyme catalyses (1R,6R)-6-hydroxy-2-succinyl-cyclohexa-2,4-diene-1-carboxylate = 2-succinylbenzoate + H2O. It participates in quinol/quinone metabolism; 1,4-dihydroxy-2-naphthoate biosynthesis; 1,4-dihydroxy-2-naphthoate from chorismate: step 4/7. The protein operates within quinol/quinone metabolism; menaquinone biosynthesis. In terms of biological role, converts 2-succinyl-6-hydroxy-2,4-cyclohexadiene-1-carboxylate (SHCHC) to 2-succinylbenzoate (OSB). The sequence is that of o-succinylbenzoate synthase from Yersinia pestis bv. Antiqua (strain Antiqua).